Here is a 792-residue protein sequence, read N- to C-terminus: Probable exo-1,4-beta-xylosidase xlnD (792 aa).

The first 20 residues, 1–20 (MSAIKSIATVLAAILPSVLA), serve as a signal peptide directing secretion. N-linked (GlcNAc...) asparagine glycans are attached at residues asparagine 23, asparagine 87, asparagine 142, and asparagine 246. Aspartate 310 is a catalytic residue. N-linked (GlcNAc...) asparagine glycans are attached at residues asparagine 326, asparagine 385, asparagine 391, asparagine 404, asparagine 438, asparagine 475, asparagine 479, asparagine 516, asparagine 677, and asparagine 699.

It belongs to the glycosyl hydrolase 3 family.

The protein localises to the secreted. It carries out the reaction Hydrolysis of (1-&gt;4)-beta-D-xylans, to remove successive D-xylose residues from the non-reducing termini.. Its pathway is glycan degradation; xylan degradation. Its function is as follows. Xylan 1,4-beta-xylosidase involved in the hydrolysis of xylan, a major structural heterogeneous polysaccharide found in plant biomass representing the second most abundant polysaccharide in the biosphere, after cellulose. This is Probable exo-1,4-beta-xylosidase xlnD (xlnD) from Aspergillus clavatus (strain ATCC 1007 / CBS 513.65 / DSM 816 / NCTC 3887 / NRRL 1 / QM 1276 / 107).